We begin with the raw amino-acid sequence, 1029 residues long: U2 snRNP-associated SURP motif-containing protein (1029 aa).

Disordered stretches follow at residues 1 to 110 (MADK…KEDE) and 141 to 273 (VNAA…DPST). Alanine 2 is subject to N-acetylalanine. Residues 7-16 (GGSQKASSKN) are compositionally biased toward polar residues. The segment covering 45–54 (TRPKSPRKHN) has biased composition (basic residues). Residues 55 to 64 (YRNESSRESL) are compositionally biased toward basic and acidic residues. Serine 67 carries the phosphoserine modification. Lysine 80 participates in a covalent cross-link: Glycyl lysine isopeptide (Lys-Gly) (interchain with G-Cter in SUMO2). Positions 92 to 121 (AKRTLSKKEQEELKKKEDEKAAAEIYEEFL) form a coiled coil. 2 stretches are compositionally biased toward basic and acidic residues: residues 97–110 (SKKEQEELKKKEDE) and 144–155 (AKDEHETDEKRG). Glycyl lysine isopeptide (Lys-Gly) (interchain with G-Cter in SUMO2) cross-links involve residues lysine 145 and lysine 168. Over residues 169-178 (NPPNQSSNER) the composition is skewed to polar residues. Residues 186–222 (ETKKPPLKKGEKEKKKSNLELFKEELKQIQEERDERH) are compositionally biased toward basic and acidic residues. A coiled-coil region spans residues 192 to 232 (LKKGEKEKKKSNLELFKEELKQIQEERDERHKTKGRLSRFE). Phosphoserine is present on serine 202. A Glycyl lysine isopeptide (Lys-Gly) (interchain with G-Cter in SUMO2) cross-link involves residue lysine 208. Serine 236 bears the Phosphoserine mark. Residues 239–249 (DGQRRSMDVPS) show a composition bias toward basic and acidic residues. The 82-residue stretch at 274–355 (TNLYLGNINP…FEMKLGWGKA (82 aa)) folds into the RRM domain. Residues 430 to 473 (LIHRMIEFVVREGPMFEAMIMNREINNPMFRFLFENQTPAHVYY) form an SURP motif repeat. At serine 485 the chain carries Phosphoserine. The region spanning 534-679 (LKEEQRDKLE…KLQNIFLGLV (146 aa)) is the CID domain. Positions 704–729 (DGAPLEDVDGIPIDATPIDDLDGVPI) are disordered. Threonine 719 is modified (phosphothreonine). Residues lysine 748 and lysine 749 each participate in a glycyl lysine isopeptide (Lys-Gly) (interchain with G-Cter in SUMO2) cross-link. Lysine 760 is subject to N6-acetyllysine; alternate. Residue lysine 760 forms a Glycyl lysine isopeptide (Lys-Gly) (interchain with G-Cter in SUMO2); alternate linkage. 2 disordered regions span residues 778–841 (KWEL…EEKR) and 855–1029 (QDEL…KNKH). Acidic residues predominate over residues 786–806 (EESEEEENQNQEEESEDEEDT). Serine 788, serine 800, and serine 811 each carry phosphoserine. Composition is skewed to basic and acidic residues over residues 810–841 (KSEEHHLYSNPVREEATESKFSKYSEMSEEKR) and 874–922 (QVEH…TPTR). Glycyl lysine isopeptide (Lys-Gly) (interchain with G-Cter in SUMO2) cross-links involve residues lysine 829 and lysine 832. The stretch at 837–915 (SEEKRAKLRE…ESRSKDKKEK (79 aa)) forms a coiled coil. Phosphothreonine is present on threonine 931. A phosphoserine mark is found at serine 946 and serine 948. Residues 950–980 (KSERSERSERSHKESSRSRSSHKDSPRDASK) show a composition bias toward basic and acidic residues. A compositionally biased stretch (basic residues) spans 991–1029 (TPKRSRRSRSRSPKKSGKKSRSQSRSPHRSHKKSKKNKH).

This sequence belongs to the splicing factor SR family. As to quaternary structure, interacts with ERBB4.

The protein resides in the nucleus. This chain is U2 snRNP-associated SURP motif-containing protein (U2surp), found in Mus musculus (Mouse).